The following is a 121-amino-acid chain: Large ribosomal subunit protein bL12 (121 aa).

The protein belongs to the bacterial ribosomal protein bL12 family. As to quaternary structure, homodimer. Part of the ribosomal stalk of the 50S ribosomal subunit. Forms a multimeric L10(L12)X complex, where L10 forms an elongated spine to which 2 to 4 L12 dimers bind in a sequential fashion. Binds GTP-bound translation factors.

Functionally, forms part of the ribosomal stalk which helps the ribosome interact with GTP-bound translation factors. Is thus essential for accurate translation. The polypeptide is Large ribosomal subunit protein bL12 (Lactococcus lactis subsp. lactis (strain IL1403) (Streptococcus lactis)).